Reading from the N-terminus, the 315-residue chain is Ornithine carbamoyltransferase (315 aa).

Residues 53–56 (STRT), Gln80, Arg104, and 131–134 (HPCQ) each bind carbamoyl phosphate. L-ornithine is bound by residues Asn163, Asp227, and 231 to 232 (SM). Carbamoyl phosphate contacts are provided by residues 267–268 (CL) and Arg295.

Belongs to the aspartate/ornithine carbamoyltransferase superfamily. OTCase family.

It is found in the cytoplasm. It catalyses the reaction carbamoyl phosphate + L-ornithine = L-citrulline + phosphate + H(+). The protein operates within amino-acid biosynthesis; L-arginine biosynthesis; L-arginine from L-ornithine and carbamoyl phosphate: step 1/3. Functionally, reversibly catalyzes the transfer of the carbamoyl group from carbamoyl phosphate (CP) to the N(epsilon) atom of ornithine (ORN) to produce L-citrulline. This is Ornithine carbamoyltransferase from Rhodococcus jostii (strain RHA1).